The sequence spans 666 residues: Probable potassium transport system protein Kup (666 aa).

Transmembrane regions (helical) follow at residues 16-36 (GFII…LYTM), 58-78 (ISLI…LIAL), 100-120 (PWLI…GALT), 141-161 (IYQN…VLFG), 165-185 (FGTG…FSFL), 221-241 (IFIL…YSDL), 253-273 (WPFV…WILA), 294-314 (VYLV…LISG), 343-363 (LYIP…VLYF), 373-393 (YGLA…YYLI), 399-419 (PFLA…FFWA), and 424-444 (FMHG…VMFI).

It belongs to the HAK/KUP transporter (TC 2.A.72) family.

It localises to the cell membrane. The catalysed reaction is K(+)(in) + H(+)(in) = K(+)(out) + H(+)(out). In terms of biological role, transport of potassium into the cell. Likely operates as a K(+):H(+) symporter. This is Probable potassium transport system protein Kup from Streptococcus pyogenes serotype M6 (strain ATCC BAA-946 / MGAS10394).